A 476-amino-acid chain; its full sequence is Aspartyl/glutamyl-tRNA(Asn/Gln) amidotransferase subunit B (476 aa).

It belongs to the GatB/GatE family. GatB subfamily. Heterotrimer of A, B and C subunits.

The enzyme catalyses L-glutamyl-tRNA(Gln) + L-glutamine + ATP + H2O = L-glutaminyl-tRNA(Gln) + L-glutamate + ADP + phosphate + H(+). The catalysed reaction is L-aspartyl-tRNA(Asn) + L-glutamine + ATP + H2O = L-asparaginyl-tRNA(Asn) + L-glutamate + ADP + phosphate + 2 H(+). Functionally, allows the formation of correctly charged Asn-tRNA(Asn) or Gln-tRNA(Gln) through the transamidation of misacylated Asp-tRNA(Asn) or Glu-tRNA(Gln) in organisms which lack either or both of asparaginyl-tRNA or glutaminyl-tRNA synthetases. The reaction takes place in the presence of glutamine and ATP through an activated phospho-Asp-tRNA(Asn) or phospho-Glu-tRNA(Gln). In Neisseria meningitidis serogroup C / serotype 2a (strain ATCC 700532 / DSM 15464 / FAM18), this protein is Aspartyl/glutamyl-tRNA(Asn/Gln) amidotransferase subunit B.